A 195-amino-acid polypeptide reads, in one-letter code: Thymidine kinase (195 aa).

ATP contacts are provided by residues 15-22 (GSMFSGKS) and 88-91 (DEVQ). E89 serves as the catalytic Proton acceptor. Zn(2+) is bound by residues C145, C148, C183, and C186.

This sequence belongs to the thymidine kinase family. Homotetramer.

Its subcellular location is the cytoplasm. It carries out the reaction thymidine + ATP = dTMP + ADP + H(+). The sequence is that of Thymidine kinase from Bacillus cereus (strain AH187).